Reading from the N-terminus, the 914-residue chain is Translation initiation factor IF-2 (914 aa).

The segment at 58 to 160 is disordered; the sequence is KTEKKQTAKK…EAEPKIEVMP (103 aa). The segment covering 70–91 has biased composition (basic and acidic residues); that stretch reads KKDTVKKDTVKKTAVKKDDSKA. Basic residues predominate over residues 92–103; that stretch reads AKKTKPIAKKSA. Over residues 104–160 the composition is skewed to basic and acidic residues; it reads PKTEKKVEKKVESKISKPDNEILEAKPEISKPEIKAEPKKEEIEQKQEAEPKIEVMP. The tr-type G domain maps to 413 to 582; that stretch reads ERVPVITIMG…LLQADLLELK (170 aa). The interval 422-429 is G1; it reads GHVDHGKT. 422-429 is a binding site for GTP; it reads GHVDHGKT. The interval 447–451 is G2; sequence GITQH. Residues 468–471 are G3; that stretch reads DTPG. GTP contacts are provided by residues 468 to 472 and 522 to 525; these read DTPGH and NKMD. The interval 522–525 is G4; sequence NKMD. The segment at 558 to 560 is G5; sequence SAK.

Belongs to the TRAFAC class translation factor GTPase superfamily. Classic translation factor GTPase family. IF-2 subfamily.

It localises to the cytoplasm. Its function is as follows. One of the essential components for the initiation of protein synthesis. Protects formylmethionyl-tRNA from spontaneous hydrolysis and promotes its binding to the 30S ribosomal subunits. Also involved in the hydrolysis of GTP during the formation of the 70S ribosomal complex. The protein is Translation initiation factor IF-2 of Campylobacter hominis (strain ATCC BAA-381 / DSM 21671 / CCUG 45161 / LMG 19568 / NCTC 13146 / CH001A).